Here is a 1553-residue protein sequence, read N- to C-terminus: Probable serine/threonine-protein kinase qkgA (1553 aa).

A disordered region spans residues 113-142 (SSSSSSSSTSSSPSLTSSPSSPISTSPPYH). LRR repeat units lie at residues 287–309 (NGTF…INMC), 311–333 (QLVE…TELK), 334–356 (FLKN…CNLT), and 357–378 (LLKV…IVEL). In terms of domain architecture, Roc spans 395–619 (SCETWNKVKL…KRLIHESEKS (225 aa)). Disordered stretches follow at residues 643 to 696 (NQGR…QQQQ), 955 to 1019 (ISNS…PSSQ), and 1048 to 1090 (NQNG…NNNK). Composition is skewed to low complexity over residues 648 to 675 (SISN…TSKK), 683 to 696 (SQQQ…QQQQ), 956 to 1018 (SNST…SPSS), and 1059 to 1090 (TTTT…NNNK). The COR domain maps to 694-893 (QQQLQQSIKE…KTYWKDGVLL (200 aa)). A Protein kinase domain is found at 1242–1546 (ILYERQIGEG…QTSYFDSPFL (305 aa)). ATP is bound by residues 1248 to 1256 (IGEGGFGLI) and Lys-1271. Residue Asp-1393 is the Proton acceptor of the active site.

This sequence belongs to the protein kinase superfamily. TKL Ser/Thr protein kinase family. ROCO subfamily.

It carries out the reaction L-seryl-[protein] + ATP = O-phospho-L-seryl-[protein] + ADP + H(+). The catalysed reaction is L-threonyl-[protein] + ATP = O-phospho-L-threonyl-[protein] + ADP + H(+). In terms of biological role, involved in growth, and during development, in aggregation. The protein is Probable serine/threonine-protein kinase qkgA (qkgA-1) of Dictyostelium discoideum (Social amoeba).